The primary structure comprises 312 residues: uncharacterized protein (312 aa).

Transmembrane regions (helical) follow at residues 13-33 (AAGTIFLLIGTVCFASKSIWI), 45-65 (AVLLYRQLLAVPLFWLIFLIY), 81-101 (ACGAGVFCFFLSPLLDFIGLN), 105-125 (AMVERILLMSYPLFVFGFTAC), 133-153 (IQDLFAVLAVMFGLFLALGGW), 162-182 (MIGAVFILLSSAVYAGYLVLS), 198-218 (GMTAAGAAMMLYTGIKSAAGM), 229-249 (MYGLFAVIAVVTTVIPFVLML), 260-280 (AAAISMAGPILTIFYGALFLG), and 283-303 (LGLIQVIGCGGVFFVITGMEY). The EamA domain maps to 173 to 303 (AVYAGYLVLS…VFFVITGMEY (131 aa)).

It belongs to the EamA transporter family.

It is found in the cell membrane. This is an uncharacterized protein from Bacillus subtilis (strain 168).